Consider the following 668-residue polypeptide: DNA ligase (668 aa).

NAD(+) is bound by residues 37-41, 86-87, and glutamate 116; these read DNVYD and SM. Lysine 118 serves as the catalytic N6-AMP-lysine intermediate. NAD(+) is bound by residues arginine 139, glutamate 173, lysine 288, and lysine 312. Positions 406, 409, 424, and 429 each coordinate Zn(2+). Residues 591-668 form the BRCT domain; the sequence is IPDNPFKDKT…TEEEAIAQIK (78 aa).

This sequence belongs to the NAD-dependent DNA ligase family. LigA subfamily. Mg(2+) serves as cofactor. Mn(2+) is required as a cofactor.

It carries out the reaction NAD(+) + (deoxyribonucleotide)n-3'-hydroxyl + 5'-phospho-(deoxyribonucleotide)m = (deoxyribonucleotide)n+m + AMP + beta-nicotinamide D-nucleotide.. Functionally, DNA ligase that catalyzes the formation of phosphodiester linkages between 5'-phosphoryl and 3'-hydroxyl groups in double-stranded DNA using NAD as a coenzyme and as the energy source for the reaction. It is essential for DNA replication and repair of damaged DNA. This Lactobacillus acidophilus (strain ATCC 700396 / NCK56 / N2 / NCFM) protein is DNA ligase.